Reading from the N-terminus, the 392-residue chain is MAATMTVEEVRKAQRAEGPATVLAIGTATPANCVYQADYPDYYFKITKSDHMADLKEKFKRMCDKSQIRKRYMHLTEEILQDNPNMCAYMAPSLDARQDIVVVEVPKLGKAAAQKAIKEWGQPRSKITHLVFCTTSGVDMPGADYQLTKMLGLRPSVKRLMMYQQGCFAGGTVLRLAKDLAENNRGARVLVVCSEITAVTFRGPHEFDSLVGQALFGDGAAAVIVGADPDESVERPLFQLVSASQTILPDSEGAIDGHLREVGLTFHLLKDVPGLISKNIERALEDAFKPLGIDDWNSVFWIAHPGGPAILDMVEAKVNLNKERMRATRHVLSEYGNMSSACVLFIMDEMRKRSAEDGHTTTGEGMDWGVLFGFGPGLTVETVVLHSVPVTA.

Residue Cys167 is part of the active site.

Belongs to the thiolase-like superfamily. Chalcone/stilbene synthases family.

It catalyses the reaction (E)-4-coumaroyl-CoA + 3 malonyl-CoA + 3 H(+) = 2',4,4',6'-tetrahydroxychalcone + 3 CO2 + 4 CoA. Its pathway is secondary metabolite biosynthesis; flavonoid biosynthesis. Its function is as follows. The primary product of this enzyme is 4,2',4',6'-tetrahydroxychalcone (also termed naringenin-chalcone or chalcone) which can under specific conditions spontaneously isomerize into naringenin. This is Chalcone synthase 1 (CHS1) from Secale cereale (Rye).